Reading from the N-terminus, the 219-residue chain is MIYLVGTPLGNLEDITLRAIRVLGEADVVACESKERALKLLSHLQIKKPLIYLREASRASDVKRIIELHKQGKTVAVTTDAGMPGISDPGAYLVRELSAQGIPFTVVPGPSALCMSITVSGLEEPWAFLGFLPLKEGKRRRELEKFLPLNIGLVIYEGPHRVGKLLSLLNELCPQRKVALLRELTKLHEEVQVGYPHELIKDSYKGEFVVVVYPSQEGT.

The protein belongs to the methyltransferase superfamily. RsmI family.

The protein resides in the cytoplasm. The catalysed reaction is cytidine(1402) in 16S rRNA + S-adenosyl-L-methionine = 2'-O-methylcytidine(1402) in 16S rRNA + S-adenosyl-L-homocysteine + H(+). Functionally, catalyzes the 2'-O-methylation of the ribose of cytidine 1402 (C1402) in 16S rRNA. This is Ribosomal RNA small subunit methyltransferase I from Coprothermobacter proteolyticus (strain ATCC 35245 / DSM 5265 / OCM 4 / BT).